The following is an 88-amino-acid chain: Large ribosomal subunit protein bL31B (88 aa).

This sequence belongs to the bacterial ribosomal protein bL31 family. Type B subfamily. As to quaternary structure, part of the 50S ribosomal subunit.

The sequence is that of Large ribosomal subunit protein bL31B from Herminiimonas arsenicoxydans.